Reading from the N-terminus, the 373-residue chain is Flagellar P-ring protein (373 aa).

The signal sequence occupies residues 1–30 (MTNRWSFDVNKNLVTVLFTWLCLSISTAHA).

This sequence belongs to the FlgI family. As to quaternary structure, the basal body constitutes a major portion of the flagellar organelle and consists of four rings (L,P,S, and M) mounted on a central rod.

Its subcellular location is the periplasm. The protein localises to the bacterial flagellum basal body. Assembles around the rod to form the L-ring and probably protects the motor/basal body from shearing forces during rotation. In Aliivibrio fischeri (strain ATCC 700601 / ES114) (Vibrio fischeri), this protein is Flagellar P-ring protein.